Here is a 53-residue protein sequence, read N- to C-terminus: uncharacterized protein (53 aa).

This is an uncharacterized protein from Dictyostelium discoideum (Social amoeba).